A 324-amino-acid chain; its full sequence is D-erythronate dehydrogenase (324 aa).

Residues serine 125, tyrosine 149, and lysine 153 each contribute to the NAD(+) site. Tyrosine 149 acts as the Proton acceptor in catalysis.

This sequence belongs to the NAD(P)-dependent epimerase/dehydratase family.

The enzyme catalyses D-erythronate + NAD(+) = 2-dehydro-D-erythronate + NADH + H(+). In terms of biological role, catalyzes oxidation of D-erythronate to 2-oxo-tetronate. Can use either NAD(+) or NADP(+) as cosubstrate, with a preference for NAD(+). The sequence is that of D-erythronate dehydrogenase from Cupriavidus necator (strain ATCC 17699 / DSM 428 / KCTC 22496 / NCIMB 10442 / H16 / Stanier 337) (Ralstonia eutropha).